The following is a 255-amino-acid chain: Imidazole glycerol phosphate synthase subunit HisF (255 aa).

Catalysis depends on residues aspartate 12 and aspartate 131.

The protein belongs to the HisA/HisF family. As to quaternary structure, heterodimer of HisH and HisF.

Its subcellular location is the cytoplasm. It catalyses the reaction 5-[(5-phospho-1-deoxy-D-ribulos-1-ylimino)methylamino]-1-(5-phospho-beta-D-ribosyl)imidazole-4-carboxamide + L-glutamine = D-erythro-1-(imidazol-4-yl)glycerol 3-phosphate + 5-amino-1-(5-phospho-beta-D-ribosyl)imidazole-4-carboxamide + L-glutamate + H(+). It participates in amino-acid biosynthesis; L-histidine biosynthesis; L-histidine from 5-phospho-alpha-D-ribose 1-diphosphate: step 5/9. In terms of biological role, IGPS catalyzes the conversion of PRFAR and glutamine to IGP, AICAR and glutamate. The HisF subunit catalyzes the cyclization activity that produces IGP and AICAR from PRFAR using the ammonia provided by the HisH subunit. This chain is Imidazole glycerol phosphate synthase subunit HisF, found in Salinispora arenicola (strain CNS-205).